The primary structure comprises 349 residues: Protein Wnt-7a (349 aa).

The signal sequence occupies residues 1–31 (MNRKARRCLGHLFLSLGMVYLRIGGFSTVVA). Intrachain disulfides connect Cys-73–Cys-84, Cys-123–Cys-131, Cys-133–Cys-152, Cys-200–Cys-214, and Cys-202–Cys-209. N-linked (GlcNAc...) asparagine glycans are attached at residues Asn-83 and Asn-127. Ser-206 is lipidated: O-palmitoleoyl serine; by PORCN. The segment at 238–266 (VEPVRASRNKRPTFLKIKKPLSYRKPMDT) is disordered linker. 6 disulfides stabilise this stretch: Cys-278–Cys-309, Cys-294–Cys-304, Cys-308–Cys-348, Cys-324–Cys-339, Cys-326–Cys-336, and Cys-331–Cys-332. A glycan (N-linked (GlcNAc...) asparagine) is linked at Asn-295.

It belongs to the Wnt family. Forms a soluble 1:1 complex with AFM; this prevents oligomerization and is required for prolonged biological activity. The complex with AFM may represent the physiological form in body fluids. Interacts with PORCN. Interacts (via intrinsically disordered linker region) with RECK; interaction with RECK confers ligand selectivity for Wnt7 in brain endothelial cells and allows these cells to selectively respond to Wnt7. Interacts with FZD5. Palmitoleoylation is required for efficient binding to frizzled receptors. Depalmitoleoylation leads to Wnt signaling pathway inhibition.

The protein resides in the secreted. It is found in the extracellular space. Its subcellular location is the extracellular matrix. Its function is as follows. Ligand for members of the frizzled family of seven transmembrane receptors that functions in the canonical Wnt/beta-catenin signaling pathway. Plays an important role in embryonic development, including dorsal versus ventral patterning during limb development, skeleton development and urogenital tract development. Required for central nervous system (CNS) angiogenesis and blood-brain barrier regulation. Required for normal, sexually dimorphic development of the Mullerian ducts, and for normal fertility in both sexes. Required for normal neural stem cell proliferation in the hippocampus dentate gyrus. Required for normal progress through the cell cycle in neural progenitor cells, for self-renewal of neural stem cells, and for normal neuronal differentiation and maturation. Promotes formation of synapses via its interaction with FZD5. The protein is Protein Wnt-7a (WNT7A) of Chlorocebus aethiops (Green monkey).